A 140-amino-acid polypeptide reads, in one-letter code: Nucleoside diphosphate kinase (140 aa).

6 residues coordinate ATP: Lys11, Phe59, Arg87, Thr93, Arg104, and Asn114. His117 acts as the Pros-phosphohistidine intermediate in catalysis.

This sequence belongs to the NDK family. As to quaternary structure, homotetramer. The cofactor is Mg(2+).

Its subcellular location is the cytoplasm. The enzyme catalyses a 2'-deoxyribonucleoside 5'-diphosphate + ATP = a 2'-deoxyribonucleoside 5'-triphosphate + ADP. The catalysed reaction is a ribonucleoside 5'-diphosphate + ATP = a ribonucleoside 5'-triphosphate + ADP. Major role in the synthesis of nucleoside triphosphates other than ATP. The ATP gamma phosphate is transferred to the NDP beta phosphate via a ping-pong mechanism, using a phosphorylated active-site intermediate. The protein is Nucleoside diphosphate kinase of Azorhizobium caulinodans (strain ATCC 43989 / DSM 5975 / JCM 20966 / LMG 6465 / NBRC 14845 / NCIMB 13405 / ORS 571).